We begin with the raw amino-acid sequence, 360 residues long: Ribosomal RNA large subunit methyltransferase M (360 aa).

S-adenosyl-L-methionine-binding positions include Ser192, 225–228 (APGG), Asp244, Asp264, and Asp280. Catalysis depends on Lys309, which acts as the Proton acceptor.

It belongs to the class I-like SAM-binding methyltransferase superfamily. RNA methyltransferase RlmE family. RlmM subfamily. In terms of assembly, monomer.

Its subcellular location is the cytoplasm. The enzyme catalyses cytidine(2498) in 23S rRNA + S-adenosyl-L-methionine = 2'-O-methylcytidine(2498) in 23S rRNA + S-adenosyl-L-homocysteine + H(+). Its function is as follows. Catalyzes the 2'-O-methylation at nucleotide C2498 in 23S rRNA. In Alkalilimnicola ehrlichii (strain ATCC BAA-1101 / DSM 17681 / MLHE-1), this protein is Ribosomal RNA large subunit methyltransferase M.